The primary structure comprises 211 residues: Probable nicotinate-nucleotide adenylyltransferase (211 aa).

It belongs to the NadD family.

It catalyses the reaction nicotinate beta-D-ribonucleotide + ATP + H(+) = deamido-NAD(+) + diphosphate. Its pathway is cofactor biosynthesis; NAD(+) biosynthesis; deamido-NAD(+) from nicotinate D-ribonucleotide: step 1/1. Catalyzes the reversible adenylation of nicotinate mononucleotide (NaMN) to nicotinic acid adenine dinucleotide (NaAD). This chain is Probable nicotinate-nucleotide adenylyltransferase, found in Legionella pneumophila (strain Corby).